A 321-amino-acid chain; its full sequence is Electron transfer flavoprotein subunit alpha (321 aa).

14 residues coordinate FAD: arginine 211, serine 236, arginine 237, glutamine 250, valine 251, serine 254, glycine 255, serine 270, serine 272, glutamine 274, histidine 275, asparagine 289, aspartate 307, and isoleucine 308.

Heterodimer of an alpha and a beta subunit. Forms a ternary complex with trimethylamine dehydrogenase. FAD is required as a cofactor.

In terms of biological role, heterodimeric electron transfer flavoprotein that accepts electrons from trimethylamine dehydrogenase. It transfers the electrons to the main respiratory chain via ETF-ubiquinone oxidoreductase (ETF dehydrogenase). The protein is Electron transfer flavoprotein subunit alpha (etfA) of Methylophilus methylotrophus (Bacterium W3A1).